We begin with the raw amino-acid sequence, 406 residues long: uncharacterized protein (406 aa).

It to S.pombe SpAC12C2.04.

It is found in the cytoplasm. The protein localises to the nucleus. This is an uncharacterized protein from Schizosaccharomyces pombe (strain 972 / ATCC 24843) (Fission yeast).